Here is a 392-residue protein sequence, read N- to C-terminus: Alanine--glyoxylate aminotransferase (392 aa).

K209 is subject to N6-(pyridoxal phosphate)lysine. K225 is subject to N6-acetyllysine; alternate. The residue at position 225 (K225) is an N6-succinyllysine; alternate. An N6-acetyllysine mark is found at K234 and K312. R360 lines the substrate pocket. The Microbody targeting signal motif lies at 390–392 (SQL).

Belongs to the class-V pyridoxal-phosphate-dependent aminotransferase family. In terms of assembly, homodimer. It depends on pyridoxal 5'-phosphate as a cofactor.

Its subcellular location is the peroxisome. It carries out the reaction L-serine + pyruvate = 3-hydroxypyruvate + L-alanine. The enzyme catalyses glyoxylate + L-alanine = glycine + pyruvate. In terms of biological role, peroxisomal aminotransferase that catalyzes the transamination of glyoxylate to glycine and contributes to the glyoxylate detoxification. Also catalyzes the transamination between L-serine and pyruvate and contributes to gluconeogenesis from the L-serine metabolism. The protein is Alanine--glyoxylate aminotransferase of Oryctolagus cuniculus (Rabbit).